The primary structure comprises 357 residues: MRVLVAMSGGVDSSVAAARMVDAGHDVVGVHLALSSAPGTLRTGSRGCCSKEDAGDARRVADVLGIPFYVWDFADRFKEDVIDDFVESYARGETPNPCVRCNERIKFSALSARALALGFDALATGHYARLTDGRLRRAVDHDKDQSYVLAVLTAEQLRHAVFPIGDTPKPAIREEAARRGLAVADKADSHDICFIPSGDTRAFLGARIGVRRGSVVDATGAVLAEHDGVHGFTIGQRKGLGIPGPGPDGRPRYVTGIDAETGTVHVGDVTDLEVTSLLGEAPVFTSGVAPDAPVECAVQVRAHGGVVDAVAELRDGALEVSLRTPLRGVAPGQTLVLYRSDPDGDEVLGSATISAAR.

ATP-binding positions include 6 to 13 (AMSGGVDS) and Leu-32. Cys-101 functions as the Nucleophile in the catalytic mechanism. A disulfide bridge connects residues Cys-101 and Cys-193. Gly-125 contributes to the ATP binding site. Residues 143-145 (KDQ) form an interaction with tRNA region. Residue Cys-193 is the Cysteine persulfide intermediate of the active site.

This sequence belongs to the MnmA/TRMU family.

The protein localises to the cytoplasm. It carries out the reaction S-sulfanyl-L-cysteinyl-[protein] + uridine(34) in tRNA + AH2 + ATP = 2-thiouridine(34) in tRNA + L-cysteinyl-[protein] + A + AMP + diphosphate + H(+). In terms of biological role, catalyzes the 2-thiolation of uridine at the wobble position (U34) of tRNA, leading to the formation of s(2)U34. The chain is tRNA-specific 2-thiouridylase MnmA from Mycolicibacterium vanbaalenii (strain DSM 7251 / JCM 13017 / BCRC 16820 / KCTC 9966 / NRRL B-24157 / PYR-1) (Mycobacterium vanbaalenii).